The chain runs to 435 residues: MIGGLFIYNHKGEVLISRVYRDDIGRNAVDAFRVNVIHARQQVRSPVTNIARTSFFHVKRSNIWLAAVTKQNVNAAMVFEFLYKMCDVMTAYFGKISEENIKNNFVLIYELLDEILDFGYPQNSETGALKTFITQQGIKSQHQTKEEQSQITSQVTGQIGWRREGIKYRRNELFLDVLESVNLLMSPQGQVLSAHVSGRVVMKSYLSGMPECKFGMNDKIVIEKQGKGTADETGKTGKQSIAIDDCTFHQCVRLSKFDSERSISFIPPDGEYELMRYRTTKDIILPFRVIPLVREVGRTKLEVKVVIKSNFKPSLLAQKIEVRIPTPLNTSGVQVICMKGKAKYKASENAIVWKIKRMAGMKESQISAEIELLPTNDKKKWARPPISMNFEVPFAPSGLKVRYLKVFEPKLNYSDHDVIKWVRYIGRSGIYETRC.

Positions 170-434 (RNELFLDVLE…IGRSGIYETR (265 aa)) constitute an MHD domain. The a 1,2-diacyl-sn-glycero-3-phospho-(1D-myo-inositol-3,4,5-trisphosphate) site is built by Lys341, Lys345, and Lys354.

This sequence belongs to the adaptor complexes medium subunit family. Adaptor protein complex 2 (AP-2) is a heterotetramer composed of two large adaptins (alpha-type subunit and beta-type subunit), a medium adaptin (mu-type subunit) and a small adaptin (sigma-type subunit).

It localises to the cell membrane. It is found in the membrane. The protein resides in the coated pit. Its function is as follows. Component of the adaptor complexes which link clathrin to receptors in coated vesicles. Clathrin-associated protein complexes are believed to interact with the cytoplasmic tails of membrane proteins, leading to their selection and concentration. AP50 is a subunit of the plasma membrane adaptor. The complex binds polyphosphoinositide-containing lipids. The protein is AP-2 complex subunit mu (ap2m1) of Xenopus laevis (African clawed frog).